A 359-amino-acid polypeptide reads, in one-letter code: UDP-N-acetylglucosamine--N-acetylmuramyl-(pentapeptide) pyrophosphoryl-undecaprenol N-acetylglucosamine transferase (359 aa).

UDP-N-acetyl-alpha-D-glucosamine-binding positions include 13 to 15 (TAG), N125, R161, S193, I241, and Q285.

The protein belongs to the glycosyltransferase 28 family. MurG subfamily.

The protein resides in the cell membrane. The enzyme catalyses di-trans,octa-cis-undecaprenyl diphospho-N-acetyl-alpha-D-muramoyl-L-alanyl-D-glutamyl-meso-2,6-diaminopimeloyl-D-alanyl-D-alanine + UDP-N-acetyl-alpha-D-glucosamine = di-trans,octa-cis-undecaprenyl diphospho-[N-acetyl-alpha-D-glucosaminyl-(1-&gt;4)]-N-acetyl-alpha-D-muramoyl-L-alanyl-D-glutamyl-meso-2,6-diaminopimeloyl-D-alanyl-D-alanine + UDP + H(+). Its pathway is cell wall biogenesis; peptidoglycan biosynthesis. Functionally, cell wall formation. Catalyzes the transfer of a GlcNAc subunit on undecaprenyl-pyrophosphoryl-MurNAc-pentapeptide (lipid intermediate I) to form undecaprenyl-pyrophosphoryl-MurNAc-(pentapeptide)GlcNAc (lipid intermediate II). The chain is UDP-N-acetylglucosamine--N-acetylmuramyl-(pentapeptide) pyrophosphoryl-undecaprenol N-acetylglucosamine transferase from Corynebacterium diphtheriae (strain ATCC 700971 / NCTC 13129 / Biotype gravis).